A 232-amino-acid polypeptide reads, in one-letter code: MMDGIRIDVLSVIPGFFDSVLDNGLLAIARKKGYADIVVHNLHDYGLGRYRQVDDSPFGGGAGMVLRPEPVFACVEKLQSERCYDAVIFPTPDARPFLQGDANRLSRMKNLMFLCGHYKALDERVRQSLVTMEYSIGDVVLSGGEIPSLLMMDALLRVVPGVLGDSESALTDSFQTGMLDCAYYTRPPEFRGMKVPEVLLSGHHAKIEQWRQENALERTRRLRPDLLGEDVE.

G116 is a binding site for S-adenosyl-L-methionine.

It belongs to the RNA methyltransferase TrmD family. Homodimer.

It is found in the cytoplasm. The enzyme catalyses guanosine(37) in tRNA + S-adenosyl-L-methionine = N(1)-methylguanosine(37) in tRNA + S-adenosyl-L-homocysteine + H(+). Its function is as follows. Specifically methylates guanosine-37 in various tRNAs. The sequence is that of tRNA (guanine-N(1)-)-methyltransferase from Chlorobium luteolum (strain DSM 273 / BCRC 81028 / 2530) (Pelodictyon luteolum).